The sequence spans 375 residues: Queuine tRNA-ribosyltransferase (375 aa).

Asp-90 (proton acceptor) is an active-site residue. Substrate is bound by residues 90 to 94, Asp-144, Gln-193, and Gly-220; that span reads DSGGF. Residues 251–257 form an RNA binding region; sequence GVGTPED. Asp-270 serves as the catalytic Nucleophile. Residues 275–279 are RNA binding; important for wobble base 34 recognition; the sequence is TRNAR. 4 residues coordinate Zn(2+): Cys-308, Cys-310, Cys-313, and His-339.

It belongs to the queuine tRNA-ribosyltransferase family. As to quaternary structure, homodimer. Within each dimer, one monomer is responsible for RNA recognition and catalysis, while the other monomer binds to the replacement base PreQ1. Requires Zn(2+) as cofactor.

It carries out the reaction 7-aminomethyl-7-carbaguanine + guanosine(34) in tRNA = 7-aminomethyl-7-carbaguanosine(34) in tRNA + guanine. It functions in the pathway tRNA modification; tRNA-queuosine biosynthesis. In terms of biological role, catalyzes the base-exchange of a guanine (G) residue with the queuine precursor 7-aminomethyl-7-deazaguanine (PreQ1) at position 34 (anticodon wobble position) in tRNAs with GU(N) anticodons (tRNA-Asp, -Asn, -His and -Tyr). Catalysis occurs through a double-displacement mechanism. The nucleophile active site attacks the C1' of nucleotide 34 to detach the guanine base from the RNA, forming a covalent enzyme-RNA intermediate. The proton acceptor active site deprotonates the incoming PreQ1, allowing a nucleophilic attack on the C1' of the ribose to form the product. After dissociation, two additional enzymatic reactions on the tRNA convert PreQ1 to queuine (Q), resulting in the hypermodified nucleoside queuosine (7-(((4,5-cis-dihydroxy-2-cyclopenten-1-yl)amino)methyl)-7-deazaguanosine). This is Queuine tRNA-ribosyltransferase from Janthinobacterium sp. (strain Marseille) (Minibacterium massiliensis).